The sequence spans 447 residues: Glutamate--tRNA ligase 2 (447 aa).

Residues 9–19 (PSPTGYLHIGN) carry the 'HIGH' region motif. The 'KMSKS' region signature appears at 240–244 (GLSKR). ATP is bound at residue lysine 243.

The protein belongs to the class-I aminoacyl-tRNA synthetase family. Glutamate--tRNA ligase type 1 subfamily. In terms of assembly, monomer.

It localises to the cytoplasm. It catalyses the reaction tRNA(Glu) + L-glutamate + ATP = L-glutamyl-tRNA(Glu) + AMP + diphosphate. Functionally, catalyzes the attachment of glutamate to tRNA(Glu) in a two-step reaction: glutamate is first activated by ATP to form Glu-AMP and then transferred to the acceptor end of tRNA(Glu). This chain is Glutamate--tRNA ligase 2, found in Methylobacterium sp. (strain 4-46).